Consider the following 168-residue polypeptide: Crossover junction endodeoxyribonuclease RuvC (168 aa).

Residues D10, E70, and D143 contribute to the active site. Residues D10, E70, and D143 each contribute to the Mg(2+) site.

Belongs to the RuvC family. In terms of assembly, homodimer which binds Holliday junction (HJ) DNA. The HJ becomes 2-fold symmetrical on binding to RuvC with unstacked arms; it has a different conformation from HJ DNA in complex with RuvA. In the full resolvosome a probable DNA-RuvA(4)-RuvB(12)-RuvC(2) complex forms which resolves the HJ. Mg(2+) serves as cofactor.

It is found in the cytoplasm. The catalysed reaction is Endonucleolytic cleavage at a junction such as a reciprocal single-stranded crossover between two homologous DNA duplexes (Holliday junction).. The RuvA-RuvB-RuvC complex processes Holliday junction (HJ) DNA during genetic recombination and DNA repair. Endonuclease that resolves HJ intermediates. Cleaves cruciform DNA by making single-stranded nicks across the HJ at symmetrical positions within the homologous arms, yielding a 5'-phosphate and a 3'-hydroxyl group; requires a central core of homology in the junction. The consensus cleavage sequence is 5'-(A/T)TT(C/G)-3'. Cleavage occurs on the 3'-side of the TT dinucleotide at the point of strand exchange. HJ branch migration catalyzed by RuvA-RuvB allows RuvC to scan DNA until it finds its consensus sequence, where it cleaves and resolves the cruciform DNA. The chain is Crossover junction endodeoxyribonuclease RuvC from Roseiflexus sp. (strain RS-1).